Consider the following 151-residue polypeptide: Abdominal ganglion neuropeptide L11 (151 aa).

The N-terminal stretch at 1–25 is a signal peptide; the sequence is MPCTPNSHRLLLVTALCLLITSLFA.

Its subcellular location is the secreted. This chain is Abdominal ganglion neuropeptide L11, found in Aplysia californica (California sea hare).